The following is a 340-amino-acid chain: Fructose-1,6-bisphosphatase class 1 (340 aa).

Mg(2+) is bound by residues Glu107, Asp126, Leu128, and Asp129. Asn215 provides a ligand contact to substrate. Glu287 is a binding site for Mg(2+).

This sequence belongs to the FBPase class 1 family. In terms of assembly, homotetramer. Mg(2+) is required as a cofactor.

It is found in the cytoplasm. The enzyme catalyses beta-D-fructose 1,6-bisphosphate + H2O = beta-D-fructose 6-phosphate + phosphate. Its pathway is carbohydrate biosynthesis; gluconeogenesis. The chain is Fructose-1,6-bisphosphatase class 1 from Brucella suis biovar 1 (strain 1330).